The chain runs to 224 residues: Heme response regulator HssR (224 aa).

In terms of domain architecture, Response regulatory spans 3-116; the sequence is QCLVVDDDPR…ELIFRIRAVL (114 aa). Aspartate 52 bears the 4-aspartylphosphate mark. A DNA-binding region (ompR/PhoB-type) is located at residues 124-222; the sequence is NSEMTIGNLT…VRGQGYKVEN (99 aa).

Post-translationally, phosphorylated by HssS.

Its subcellular location is the cytoplasm. In terms of biological role, member of the two-component regulatory system HssS/HssR involved in intracellular heme homeostasis and tempering of staphylococcal virulence. Phosphorylated HssR binds to a direct repeat sequence within hrtAB promoter and activates the expression of hrtAB, an efflux pump, in response to extracellular heme, hemin, hemoglobin or blood. The polypeptide is Heme response regulator HssR (hssR) (Staphylococcus aureus (strain COL)).